The primary structure comprises 288 residues: Acetyl-coenzyme A carboxylase carboxyl transferase subunit beta (288 aa).

The region spanning 32–288 (LFAKCPACKH…LELHTEVENV (257 aa)) is the CoA carboxyltransferase N-terminal domain. Zn(2+)-binding residues include Cys-36, Cys-39, Cys-54, and Cys-57. Residues 36–57 (CPACKHTIYQKDLGKNKVCPNC) form a C4-type zinc finger.

Belongs to the AccD/PCCB family. Acetyl-CoA carboxylase is a heterohexamer composed of biotin carboxyl carrier protein (AccB), biotin carboxylase (AccC) and two subunits each of ACCase subunit alpha (AccA) and ACCase subunit beta (AccD). Requires Zn(2+) as cofactor.

The protein resides in the cytoplasm. The catalysed reaction is N(6)-carboxybiotinyl-L-lysyl-[protein] + acetyl-CoA = N(6)-biotinyl-L-lysyl-[protein] + malonyl-CoA. It participates in lipid metabolism; malonyl-CoA biosynthesis; malonyl-CoA from acetyl-CoA: step 1/1. Functionally, component of the acetyl coenzyme A carboxylase (ACC) complex. Biotin carboxylase (BC) catalyzes the carboxylation of biotin on its carrier protein (BCCP) and then the CO(2) group is transferred by the transcarboxylase to acetyl-CoA to form malonyl-CoA. This is Acetyl-coenzyme A carboxylase carboxyl transferase subunit beta from Lactococcus lactis subsp. cremoris (strain MG1363).